The sequence spans 498 residues: Zinc finger protein 682 (498 aa).

Residues 4–75 enclose the KRAB domain; that stretch reads LTFRDVTIEF…KRHETIAKPP (72 aa). 10 consecutive C2H2-type zinc fingers follow at residues 173–195, 201–223, 229–251, 257–279, 285–307, 313–335, 341–363, 369–391, 397–419, and 425–447; these read FKCM…KIIH, CICE…KRIH, YKCE…KRIH, YKCE…KKIH, YTCE…KTIH, YKCK…ERTH, YKCE…KVIH, and YNCE…KKIH. A C2H2-type 11; degenerate zinc finger spans residues 453-475; sequence YKCEECGKAFKRCSHLNEHKRVQ.

The protein belongs to the krueppel C2H2-type zinc-finger protein family.

The protein localises to the nucleus. Functionally, may be involved in transcriptional regulation. The sequence is that of Zinc finger protein 682 (ZNF682) from Homo sapiens (Human).